The following is a 226-amino-acid chain: Probable transaldolase (226 aa).

The active-site Schiff-base intermediate with substrate is the lysine 91.

Belongs to the transaldolase family. Type 3B subfamily.

It localises to the cytoplasm. The catalysed reaction is D-sedoheptulose 7-phosphate + D-glyceraldehyde 3-phosphate = D-erythrose 4-phosphate + beta-D-fructose 6-phosphate. The protein operates within carbohydrate degradation; pentose phosphate pathway; D-glyceraldehyde 3-phosphate and beta-D-fructose 6-phosphate from D-ribose 5-phosphate and D-xylulose 5-phosphate (non-oxidative stage): step 2/3. Its function is as follows. Transaldolase is important for the balance of metabolites in the pentose-phosphate pathway. This chain is Probable transaldolase, found in Chlorobium phaeobacteroides (strain DSM 266 / SMG 266 / 2430).